Consider the following 321-residue polypeptide: MNQHYGRHGRGRGRDFAACAPPKKKGRNHIPERWKDYLPVGQRMPGTRFIAFKVPLQKKFEAKLMPEECFSPLDLFNKIQEQNEELGLIIDLTYTQRYYKVEDLPETISYIKIFTVGHQIPDNDTIFQFKCAVKEFLKKNKNNDKLIGVHCTHGLNRTGYLICRYLIDVEGMRPDDAIELFNSCRGHCIERQNYIENLQKRHVRKNRNVSAPRTDGLEDSADPTEQVYTNNKPVKKKPRKNRRGGHLAPSQHFQHQTQSSPYSLRKWSQNQSVYQRGLVPPPGPAGEDYSQRRFFWSARPNKWTAESYQRPFYPYYWEWNL.

Basic residues predominate over residues 1 to 11 (MNQHYGRHGRG). Positions 1-27 (MNQHYGRHGRGRGRDFAACAPPKKKGR) are disordered. The region spanning 60 to 207 (FEAKLMPEEC…LQKRHVRKNR (148 aa)) is the Tyrosine-protein phosphatase domain. The active-site Phosphocysteine intermediate is the Cys151. A substrate-binding site is contributed by 152 to 157 (THGLNR). Arg157 (proton donor/acceptor) is an active-site residue. Residues 205–262 (KNRNVSAPRTDGLEDSADPTEQVYTNNKPVKKKPRKNRRGGHLAPSQHFQHQTQSSPY) form a disordered region. Over residues 233 to 245 (PVKKKPRKNRRGG) the composition is skewed to basic residues. Over residues 251–262 (QHFQHQTQSSPY) the composition is skewed to polar residues.

Belongs to the protein-tyrosine phosphatase family. Non-receptor class dual specificity subfamily. Monomer. May interact with SFRS7 and SFRS9/SRP30C.

Its subcellular location is the nucleus. It is found in the nucleus speckle. Its function is as follows. Possesses RNA 5'-triphosphatase and diphosphatase activities, but displays a poor protein-tyrosine phosphatase activity. In addition, has phosphatase activity with ATP, ADP and O-methylfluorescein phosphate (in vitro). Binds to RNA. May participate in nuclear mRNA metabolism. The sequence is that of RNA/RNP complex-1-interacting phosphatase (Dusp11) from Mus musculus (Mouse).